Here is a 111-residue protein sequence, read N- to C-terminus: Colicin-Ia immunity protein (111 aa).

Transmembrane regions (helical) follow at residues 33 to 53 (LLFW…KWYI) and 85 to 105 (TGTV…SVII).

The protein resides in the cell membrane. This protein is able to protect a cell, which harbors the plasmid ColIa-CA53 encoding colicin Ia, against colicin Ia. This is Colicin-Ia immunity protein from Escherichia coli.